Consider the following 269-residue polypeptide: Regulatory protein RecX (269 aa).

This sequence belongs to the RecX family.

Its subcellular location is the cytoplasm. Functionally, modulates RecA activity. The protein is Regulatory protein RecX of Listeria monocytogenes serotype 4b (strain F2365).